A 201-amino-acid polypeptide reads, in one-letter code: Small ribosomal subunit protein uS4c (201 aa).

Positions 16–43 (GALPGLTSKKPRSASDLRNQSRSGKRSQ) are disordered. Positions 89–169 (MRLDNILFRL…LPKHLTLHSF (81 aa)) constitute an S4 RNA-binding domain.

This sequence belongs to the universal ribosomal protein uS4 family. Part of the 30S ribosomal subunit. Contacts protein S5. The interaction surface between S4 and S5 is involved in control of translational fidelity.

Its subcellular location is the plastid. The protein localises to the chloroplast. Its function is as follows. One of the primary rRNA binding proteins, it binds directly to 16S rRNA where it nucleates assembly of the body of the 30S subunit. With S5 and S12 plays an important role in translational accuracy. This Nymphaea alba (White water-lily) protein is Small ribosomal subunit protein uS4c (rps4).